Reading from the N-terminus, the 546-residue chain is NADH-ubiquinone oxidoreductase chain 5 (546 aa).

16 consecutive transmembrane segments (helical) span residues 1–21 (MFLLSVFFPLLGGLVNTSPIA), 31–51 (IIAIGCMVVAFISSVVIYYEV), 52–72 (VFMGCAVSVDVFGTWFSVGTF), 82–102 (LLTANMLFTVTGVSMAVHMYA), 112–132 (LNLFLGYLSYFTGFMCVLVAA), 135–155 (LLVMLVGWEGIGVCSYLLIGY), 175–195 (VSDGLLMWGVLWVWYHLGSLE), 198–218 (LLNVYSASGFVGLSILIGAMG), 237–257 (TPVSALIHAATLVTAGVYLLV), 264–284 (EMFVIIVGSLTAFMAGVFGAT), 291–310 (VIAYSTCSQLGYMMVSLGLG), 321–341 (LMTHASFKAALFLAAGMVISG), 358–378 (AMFTMLTLMVASLSLIGWPEL), 387–407 (ILNLAAICADPIADVAHTLLL), 440–460 (VLPILAMAILLLDIMLKVWVG), and 468–488 (LFFLPWGVKTLPFGLMVAGIL).

Belongs to the complex I subunit 5 family.

It is found in the mitochondrion inner membrane. It catalyses the reaction a ubiquinone + NADH + 5 H(+)(in) = a ubiquinol + NAD(+) + 4 H(+)(out). In terms of biological role, core subunit of the mitochondrial membrane respiratory chain NADH dehydrogenase (Complex I) that is believed to belong to the minimal assembly required for catalysis. Complex I functions in the transfer of electrons from NADH to the respiratory chain. The immediate electron acceptor for the enzyme is believed to be ubiquinone. The chain is NADH-ubiquinone oxidoreductase chain 5 (ND5) from Chlamydomonas reinhardtii (Chlamydomonas smithii).